Reading from the N-terminus, the 1316-residue chain is DNA-directed RNA polymerase subunit beta' (1316 aa).

Positions 60, 62, 75, and 78 each coordinate Zn(2+). Mg(2+)-binding residues include aspartate 535, aspartate 537, and aspartate 539. Positions 891, 968, 975, and 978 each coordinate Zn(2+).

It belongs to the RNA polymerase beta' chain family. The RNAP catalytic core consists of 2 alpha, 1 beta, 1 beta' and 1 omega subunit. When a sigma factor is associated with the core the holoenzyme is formed, which can initiate transcription. It depends on Mg(2+) as a cofactor. The cofactor is Zn(2+).

The enzyme catalyses RNA(n) + a ribonucleoside 5'-triphosphate = RNA(n+1) + diphosphate. Its function is as follows. DNA-dependent RNA polymerase catalyzes the transcription of DNA into RNA using the four ribonucleoside triphosphates as substrates. The chain is DNA-directed RNA polymerase subunit beta' from Mycobacterium marinum (strain ATCC BAA-535 / M).